The following is a 127-amino-acid chain: NHP2-like protein 1 homolog (127 aa).

Belongs to the eukaryotic ribosomal protein eL8 family.

It is found in the nucleus. Its subcellular location is the nucleolus. Functionally, binds to the 5'-stem-loop of U4 snRNA and may play a role in the late stage of spliceosome assembly. The protein undergoes a conformational change upon RNA-binding. This Drosophila melanogaster (Fruit fly) protein is NHP2-like protein 1 homolog (hoip).